The following is a 142-amino-acid chain: Hemoglobin subunit alpha-1 (142 aa).

Ser1 is subject to N-acetylserine. Residues 1–142 form the Globin domain; the sequence is SLSVKDKAAV…VALALAERYR (142 aa). His59 is a binding site for O2. His88 is a binding site for heme b.

It belongs to the globin family. In terms of assembly, hb 1 is a heterotetramer of two alpha-1 and two beta-1 chains. Red blood cells.

Involved in oxygen transport from gills to the various peripheral tissues. This chain is Hemoglobin subunit alpha-1 (hba1), found in Gobionotothen gibberifrons (Humped rockcod).